We begin with the raw amino-acid sequence, 107 residues long: Ig kappa chain V-VI region NQ5-78.2.6 (107 aa).

Positions 1 to 23 are framework-1; it reads QILLTQSPAIMSASPGQKVTMTC. Cys23 and Cys87 are disulfide-bonded. Residues 24 to 33 are complementarity-determining-1; it reads SASSSVSYMH. The interval 34-48 is framework-2; sequence WYQQKSGTSPKRWIY. The interval 49 to 55 is complementarity-determining-2; the sequence is DTSKLAS. Residues 56 to 87 form a framework-3 region; it reads GVPARFXGSGSATSYSLTITSMQAEDAATYYC. The complementarity-determining-3 stretch occupies residues 88-96; sequence QQWSSNPLT. The interval 97–106 is framework-4; it reads FGSGTKLEXK.

Anti-2-phenyl oxazolone (PHOX) Antibody. The chain is Ig kappa chain V-VI region NQ5-78.2.6 from Mus musculus (Mouse).